The following is a 199-amino-acid chain: Charged multivesicular body protein 1b (199 aa).

Coiled-coil stretches lie at residues 10–30 (NLKFAAKELQRNSKKCDKEEK) and 178–199 (TSVASAEQDELSQRLAKLRDQV). The segment at 167–199 (ELPQGQTGSVGTSVASAEQDELSQRLAKLRDQV) is disordered. Residues 170–182 (QGQTGSVGTSVAS) are compositionally biased toward polar residues. Residues 186–196 (DELSQRLAKLR) carry the MIT-interacting motif motif.

Belongs to the SNF7 family. In terms of assembly, probable peripherally associated component of the endosomal sorting required for transport complex III (ESCRT-III).

It localises to the cytoplasm. It is found in the cytosol. Its subcellular location is the endosome. The protein localises to the late endosome membrane. Probable peripherally associated component of the endosomal sorting required for transport complex III (ESCRT-III) which is involved in multivesicular bodies (MVBs) formation and sorting of endosomal cargo proteins into MVBs. MVBs contain intraluminal vesicles (ILVs) that are generated by invagination and scission from the limiting membrane of the endosome and mostly are delivered to lysosomes enabling degradation of membrane proteins, such as stimulated growth factor receptors, lysosomal enzymes and lipids. The protein is Charged multivesicular body protein 1b (chmp1b) of Danio rerio (Zebrafish).